Consider the following 304-residue polypeptide: tRNA pseudouridine synthase B (304 aa).

Aspartate 47 acts as the Nucleophile in catalysis. Residues 85–105 (TNTDDGEGEVTETSDARPSDD) form a disordered region.

It belongs to the pseudouridine synthase TruB family. Type 1 subfamily.

The enzyme catalyses uridine(55) in tRNA = pseudouridine(55) in tRNA. In terms of biological role, responsible for synthesis of pseudouridine from uracil-55 in the psi GC loop of transfer RNAs. The chain is tRNA pseudouridine synthase B from Dinoroseobacter shibae (strain DSM 16493 / NCIMB 14021 / DFL 12).